An 88-amino-acid polypeptide reads, in one-letter code: MPNTKSAEKALRVADANRQENRRAKSQVKTSLTKVKKLVDAGSINEAETAAVSAQSNLDKAAEKGIIHPKNAARRKSRLMKKLNQAAK.

The span at 1-23 (MPNTKSAEKALRVADANRQENRR) shows a compositional bias: basic and acidic residues. A disordered region spans residues 1–29 (MPNTKSAEKALRVADANRQENRRAKSQVK).

This sequence belongs to the bacterial ribosomal protein bS20 family.

Functionally, binds directly to 16S ribosomal RNA. The sequence is that of Small ribosomal subunit protein bS20 from Dehalococcoides mccartyi (strain ATCC BAA-2100 / JCM 16839 / KCTC 5957 / BAV1).